The chain runs to 102 residues: Small ribosomal subunit protein uS10m (102 aa).

This sequence belongs to the universal ribosomal protein uS10 family.

The protein localises to the mitochondrion. The polypeptide is Small ribosomal subunit protein uS10m (RPS10) (Marchantia polymorpha (Common liverwort)).